A 403-amino-acid chain; its full sequence is Peptidyl-prolyl cis-trans isomerase FKBP8 (403 aa).

Positions 26 to 54 are disordered; sequence VLDGVDDAEEEDDLSGLPPLEDMGQPTVE. Acidic residues predominate over residues 28-39; sequence DGVDDAEEEDDL. The PPIase FKBP-type domain occupies 110–195; it reads GQVVTVHLQM…CLEVTLKTAE (86 aa). The TPR 1 repeat unit spans residues 212 to 245; the sequence is ANRKRECGNAHYQRADFVLAANSYDLAIKAITSN. Glycyl lysine isopeptide (Lys-Gly) (interchain with G-Cter in ubiquitin) cross-links involve residues K240, K262, K264, and K275. TPR repeat units follow at residues 263–296 and 297–330; these read VKCLNNLAASQLKLDHYRAALRSCSQVLEHQPDN and IKALFRKGKVLAQQGEYSEAIPILRAALKLEPSN. Residue S287 is modified to Phosphoserine. Residues K298, K305, K325, K331, K339, K342, and K343 each participate in a glycyl lysine isopeptide (Lys-Gly) (interchain with G-Cter in ubiquitin) cross-link. Residues 381–401 form a helical membrane-spanning segment; sequence WLFGATAVALGGVALSVVIAA.

Homomultimers or heteromultimers (Potential). Forms heterodimer with calmodulin. When activated by calmodulin and calcium, interacts with the BH4 domain of BCL2 and weakly with BCLX isoform Bcl-X(L). Does not bind and inhibit calcineurin. Interacts with ZFYVE27; may negatively regulate ZFYVE27 phosphorylation. Ca(2+) serves as cofactor. Post-translationally, ubiquitinated by PRKN during mitophagy, leading to its degradation and enhancement of mitophagy. Deubiquitinated by USP30.

The protein localises to the mitochondrion membrane. It catalyses the reaction [protein]-peptidylproline (omega=180) = [protein]-peptidylproline (omega=0). Constitutively inactive PPiase, which becomes active when bound to calmodulin and calcium. Seems to act as a chaperone for BCL2, targets it to the mitochondria and modulates its phosphorylation state. The BCL2/FKBP8/calmodulin/calcium complex probably interferes with the binding of BCL2 to its targets. The active form of FKBP8 may therefore play a role in the regulation of apoptosis. The polypeptide is Peptidyl-prolyl cis-trans isomerase FKBP8 (Fkbp8) (Rattus norvegicus (Rat)).